Consider the following 287-residue polypeptide: Inorganic pyrophosphatase (287 aa).

Diphosphate is bound at residue Arg79. Mg(2+) contacts are provided by Asp116, Asp121, and Asp153.

This sequence belongs to the PPase family. The cofactor is Mg(2+).

It is found in the cytoplasm. The catalysed reaction is diphosphate + H2O = 2 phosphate + H(+). The protein is Inorganic pyrophosphatase (IPP1) of Debaryomyces hansenii (strain ATCC 36239 / CBS 767 / BCRC 21394 / JCM 1990 / NBRC 0083 / IGC 2968) (Yeast).